The sequence spans 444 residues: MSNTILQHLPIGQKVGIAFSGGLDTSAALLWMRQKGAVPYAYTANLGQPDEEDYNAIPRKAMEYGAEKARLIDCRNQLAHEGIAAIQCGAFHISTGGVTYFNTTPLGRAVTGTMLVSAMKEDDVNIWGDGSTFKGNDIERFYRYGLLTNPSLRIYKPWLDNQFIDELGGRQEMSEFLIANGFDYKMSVEKAYSTDSNMLGATHEAKDLEYLNSGIRIVKPIMGVAFWRDDVTVKAEEVTVGFEDGVPVTLNGQSFSSAVELFLEANRIGGRHGLGMSDQIENRIIEAKSRGIYEAPGMALLHIAYERLVTAIHNEDTIEQYRINGLRLGRLLYQGRWFDPQALMLRETAQRWVARAVTGEVTLELRRGNDYSILNTVSPNMTYHPERLSMEKVENAPFDPSDRIGQLTMRNLDITDTRDKLGIYTHTGLLTVGKDSMLPQLDKK.

ATP-binding positions include 18–26 (AFSGGLDTS) and Ala-44. Tyr-100 provides a ligand contact to L-citrulline. Residues Gly-130 and Thr-132 each contribute to the ATP site. L-aspartate is bound by residues Thr-132, Asn-136, and Asp-137. Asn-136 is an L-citrulline binding site. Asp-137 is a binding site for ATP. The L-citrulline site is built by Arg-140 and Ser-193. Asp-195 serves as a coordination point for ATP. Thr-202, Glu-204, and Glu-281 together coordinate L-citrulline.

Belongs to the argininosuccinate synthase family. Type 2 subfamily. In terms of assembly, homotetramer.

The protein resides in the cytoplasm. The catalysed reaction is L-citrulline + L-aspartate + ATP = 2-(N(omega)-L-arginino)succinate + AMP + diphosphate + H(+). Its pathway is amino-acid biosynthesis; L-arginine biosynthesis; L-arginine from L-ornithine and carbamoyl phosphate: step 2/3. The protein is Argininosuccinate synthase of Histophilus somni (strain 129Pt) (Haemophilus somnus).